The following is a 644-amino-acid chain: MSDVKVYPVDPNVAANALINEEQYQEMYKRSIDDPAAFWAEQAEARIDWFKKWDNVLDFDLRKGHIKWFEGAKLNVSYNCIDRHLEKRGDKVAILWEGDNPAADRKITYRELSALVNKFANALKARGVKKGDRVCIYMPMIPEAAVAMLACTRIGAVHSIVFGGFSPDALRDRIIDAECRVVITADGGMRGSKKIPLRKNVETALAQCPNVHTCFVVQDTQLEIEWTEGRDVWYHEAIAAASADCPPEEMDAEDPLFVLYTSGSTGKPKGVLHTTGGYLLYASITHQYIFDYHEDDIYWCTADVGWVTGHTYIVYGPLANGATTLMFEGVPTYPDASRFWQVVDKHQVSIFYTAPTAIRSIMSQGDALVKATSRQSLRILGSVGEPINPEAWEWYYHVVGEGRCPIVDTWWQTETGGILITPLPGATPLKPGSATRPFFGVNPKVLSNEGKEMEGPCEGILVLDHPWPGMMRTVYGDHDRFINTYFANYPGYYFCGDGCRRDEDGYYWITGRVDDVINVSGHRLGTAEVESALVLHDQVAEAAVVGMPHEIKGQGIYAYVTLMSGVEPSDALKTELVKLVRKEIGPIASLDVIQFAPGLPKTRSGKIMRRILRKIAAHEVDTLGDTSTLADPSVVQNLIDNMPK.

CoA-binding positions include 190-193 (RGSK) and Thr308. ATP is bound by residues 384–386 (GEP), 408–413 (DTWWQT), Asp497, and Arg512. A CoA-binding site is contributed by Ser520. Arg523 serves as a coordination point for ATP. Positions 534, 536, and 539 each coordinate Mg(2+). Arg581 contributes to the CoA binding site. Lys606 carries the N6-acetyllysine modification.

Belongs to the ATP-dependent AMP-binding enzyme family. It depends on Mg(2+) as a cofactor. In terms of processing, acetylated. Deacetylation by the SIR2-homolog deacetylase activates the enzyme.

The enzyme catalyses acetate + ATP + CoA = acetyl-CoA + AMP + diphosphate. Functionally, catalyzes the conversion of acetate into acetyl-CoA (AcCoA), an essential intermediate at the junction of anabolic and catabolic pathways. AcsA undergoes a two-step reaction. In the first half reaction, AcsA combines acetate with ATP to form acetyl-adenylate (AcAMP) intermediate. In the second half reaction, it can then transfer the acetyl group from AcAMP to the sulfhydryl group of CoA, forming the product AcCoA. The polypeptide is Acetyl-coenzyme A synthetase (Magnetococcus marinus (strain ATCC BAA-1437 / JCM 17883 / MC-1)).